Consider the following 225-residue polypeptide: Small ribosomal subunit protein uS5 (225 aa).

In terms of domain architecture, S5 DRBM spans 57–120 (LEEQVLDVKL…AHAKLSLIKV (64 aa)).

This sequence belongs to the universal ribosomal protein uS5 family. In terms of assembly, part of the 30S ribosomal subunit. Contacts protein S4.

Functionally, with S4 and S12 plays an important role in translational accuracy. The sequence is that of Small ribosomal subunit protein uS5 from Methanococcus maripaludis (strain DSM 14266 / JCM 13030 / NBRC 101832 / S2 / LL).